The primary structure comprises 359 residues: Peptide chain release factor 1 (359 aa).

At Q236 the chain carries N5-methylglutamine.

The protein belongs to the prokaryotic/mitochondrial release factor family. Methylated by PrmC. Methylation increases the termination efficiency of RF1.

It localises to the cytoplasm. Its function is as follows. Peptide chain release factor 1 directs the termination of translation in response to the peptide chain termination codons UAG and UAA. This is Peptide chain release factor 1 from Streptococcus agalactiae serotype V (strain ATCC BAA-611 / 2603 V/R).